The chain runs to 63 residues: Large ribosomal subunit protein bL35 (63 aa).

This sequence belongs to the bacterial ribosomal protein bL35 family.

In Campylobacter concisus (strain 13826), this protein is Large ribosomal subunit protein bL35.